The following is a 246-amino-acid chain: MFRYQVLIEYIGTNFVGWQIQSKGKSIQKEIQVKLSKFLKEKVVLIGSGRTDAGVHAIEQSAHFDCKKEIQNLDKLLKSINHFINDKGISVLAIKKRSLKFHARHSAKQRIYKYIIFNRLSKPSLEKERGWHIIKKLDIELMKKGSKKLLGTKDFSTFRASSCNAKSPIKTMKSVNIKSKDGRIEIQFKSQSFLQQQVRSMVGSLKYLAENKWDLKKFEFVIKSKKRILCAPPAPAEGLFLEKVIY.

The active-site Nucleophile is Asp-52. Tyr-112 is a substrate binding site.

Belongs to the tRNA pseudouridine synthase TruA family. As to quaternary structure, homodimer.

It carries out the reaction uridine(38/39/40) in tRNA = pseudouridine(38/39/40) in tRNA. Functionally, formation of pseudouridine at positions 38, 39 and 40 in the anticodon stem and loop of transfer RNAs. This chain is tRNA pseudouridine synthase A, found in Pelagibacter ubique (strain HTCC1062).